Here is a 179-residue protein sequence, read N- to C-terminus: Nucleoside diphosphate kinase 6 (179 aa).

K18, F67, R95, T101, R115, and N125 together coordinate ATP. H128 functions as the Pros-phosphohistidine intermediate in the catalytic mechanism.

The protein belongs to the NDK family. It depends on Mg(2+) as a cofactor.

It catalyses the reaction a 2'-deoxyribonucleoside 5'-diphosphate + ATP = a 2'-deoxyribonucleoside 5'-triphosphate + ADP. It carries out the reaction a ribonucleoside 5'-diphosphate + ATP = a ribonucleoside 5'-triphosphate + ADP. Major role in the synthesis of nucleoside triphosphates other than ATP. The ATP gamma phosphate is transferred to the NDP beta phosphate via a ping-pong mechanism, using a phosphorylated active-site intermediate. The sequence is that of Nucleoside diphosphate kinase 6 (nme6) from Xenopus tropicalis (Western clawed frog).